The primary structure comprises 255 residues: GTP cyclohydrolase FolE2 (255 aa).

This sequence belongs to the GTP cyclohydrolase IV family.

The catalysed reaction is GTP + H2O = 7,8-dihydroneopterin 3'-triphosphate + formate + H(+). It participates in cofactor biosynthesis; 7,8-dihydroneopterin triphosphate biosynthesis; 7,8-dihydroneopterin triphosphate from GTP: step 1/1. In terms of biological role, converts GTP to 7,8-dihydroneopterin triphosphate. The protein is GTP cyclohydrolase FolE2 of Syntrophus aciditrophicus (strain SB).